Consider the following 427-residue polypeptide: UDP-N-acetylglucosamine 1-carboxyvinyltransferase (427 aa).

22 to 23 (KN) contacts phosphoenolpyruvate. Arginine 92 provides a ligand contact to UDP-N-acetyl-alpha-D-glucosamine. Aspartate 116 functions as the Proton donor in the catalytic mechanism. UDP-N-acetyl-alpha-D-glucosamine-binding residues include aspartate 312 and methionine 334.

It belongs to the EPSP synthase family. MurA subfamily.

It localises to the cytoplasm. It carries out the reaction phosphoenolpyruvate + UDP-N-acetyl-alpha-D-glucosamine = UDP-N-acetyl-3-O-(1-carboxyvinyl)-alpha-D-glucosamine + phosphate. The protein operates within cell wall biogenesis; peptidoglycan biosynthesis. Functionally, cell wall formation. Adds enolpyruvyl to UDP-N-acetylglucosamine. The polypeptide is UDP-N-acetylglucosamine 1-carboxyvinyltransferase (Borrelia garinii subsp. bavariensis (strain ATCC BAA-2496 / DSM 23469 / PBi) (Borreliella bavariensis)).